The chain runs to 348 residues: MKFLDLAKVYIRSGAGGNGCVSFRREKFIEYGGPDGGDGGKGGSVWAEAVDGLNTLIDFRYQQHFFAKNGQSGMGRQRSGKDGDEIVLRVPVGTEILDEDEETVLADLTHVGERVLLAKGGNGGFGNLHFKSSTNQAPRRANSGQEGVERTIWLRLKLIADAGLLGLPNAGKSTFLSSTSNARPKIADYPFTTLHPNLGVVGIDNTEFVMADIPGLIEGAHEGRGIGDRFLGHVERCAVLLHLVDGTSETVAEDYRTIINELEAYGGELASKPRVTALNKIDALDDEERAEARAALEAEVGAPVLMMSSVSREGLDLVLRAVRAEIDDDRLRIKQAEASEEEDTPWQP.

The Obg domain maps to 1–159 (MKFLDLAKVY…RTIWLRLKLI (159 aa)). Residues 160–327 (ADAGLLGLPN…VLRAVRAEID (168 aa)) enclose the OBG-type G domain. GTP contacts are provided by residues 166–173 (GLPNAGKS), 191–195 (FTTLH), 212–215 (DIPG), 279–282 (NKID), and 308–310 (SSV). 2 residues coordinate Mg(2+): Ser-173 and Thr-193.

This sequence belongs to the TRAFAC class OBG-HflX-like GTPase superfamily. OBG GTPase family. As to quaternary structure, monomer. Mg(2+) is required as a cofactor.

It is found in the cytoplasm. In terms of biological role, an essential GTPase which binds GTP, GDP and possibly (p)ppGpp with moderate affinity, with high nucleotide exchange rates and a fairly low GTP hydrolysis rate. Plays a role in control of the cell cycle, stress response, ribosome biogenesis and in those bacteria that undergo differentiation, in morphogenesis control. In Ruegeria sp. (strain TM1040) (Silicibacter sp.), this protein is GTPase Obg.